The sequence spans 295 residues: Putative nudix hydrolase 7 (295 aa).

The 174-residue stretch at 9–182 (SWRSAASIIL…KYALPPPQVY (174 aa)) folds into the Nudix hydrolase domain. A Nudix box motif is present at residues 52 to 73 (TDAKLGDEFRIAAVRELFEESG). 2 residues coordinate Mg(2+): glutamate 67 and glutamate 71.

Belongs to the Nudix hydrolase family. Requires Mg(2+) as cofactor. It depends on Mn(2+) as a cofactor.

Functionally, probably mediates the hydrolysis of some nucleoside diphosphate derivatives. The polypeptide is Putative nudix hydrolase 7 (ndx-7) (Caenorhabditis elegans).